The sequence spans 430 residues: Replication protein A 32 kDa subunit C (430 aa).

A disordered region spans residues 14–46 (MPSQRSGAPAPEYSAAGTGAAAAPSPSKPRDPR). Residues 23–38 (APEYSAAGTGAAAAPS) show a composition bias toward low complexity. The OB DNA-binding region spans 86-160 (VRVLGRVVSV…QGLARSIRPI (75 aa)).

Belongs to the replication factor A protein 2 family. As to quaternary structure, heterotrimer of RPA1, RPA2 and RPA3 (canonical replication protein A complex). Interacts with RPA1C and RPA3. Phosphorylated in a cell-cycle-dependent manner (from the S phase until mitosis). In response to DNA damage, recruited to DNA-repair nuclear foci, as a hypophosphorylated form.

Its subcellular location is the nucleus. Functionally, component of the replication protein A complex (RPA) required for DNA recombination, repair and replication. The activity of RPA is mediated by single-stranded DNA binding and protein interactions. This is Replication protein A 32 kDa subunit C (RPA2C) from Oryza sativa subsp. japonica (Rice).